Here is a 324-residue protein sequence, read N- to C-terminus: Ig gamma-1 chain C region secreted form (324 aa).

A CH1 region spans residues 1-97 (AKTTPPSVYP…ASSTKVDKKI (97 aa)). Cysteine 27 and cysteine 82 are oxidised to a cystine. The segment at 98-110 (VPRDCGCKPCICT) is hinge. The tract at residues 111–217 (VPEVSSVFIF…PIEKTISKTK (107 aa)) is CH2. Intrachain disulfides connect cysteine 138-cysteine 198 and cysteine 244-cysteine 302. N-linked (GlcNAc...) asparagine glycosylation is present at asparagine 174. A CH3 region spans residues 218-324 (GRPKAPQVYT…EKSLSHSPGK (107 aa)).

It is found in the secreted. The chain is Ig gamma-1 chain C region secreted form (Ighg1) from Mus musculus (Mouse).